The chain runs to 331 residues: Vitamin B12 import system permease protein BtuC (331 aa).

9 helical membrane passes run 20–42 (IMSV…FLSP), 62–84 (LVAA…VLLG), 91–113 (GVLG…LPVL), 118–140 (IFML…IARA), 147–169 (RLLL…AFYF), 189–208 (ASWY…VWLC), 240–262 (LAIS…VGLV), 277–299 (YLLP…GARL), and 306–325 (LPLG…WMLV).

The protein belongs to the binding-protein-dependent transport system permease family. FecCD subfamily. The complex is composed of two ATP-binding proteins (BtuD), two transmembrane proteins (BtuC) and a solute-binding protein (BtuF).

The protein localises to the cell inner membrane. In terms of biological role, part of the ABC transporter complex BtuCDF involved in vitamin B12 import. Involved in the translocation of the substrate across the membrane. The chain is Vitamin B12 import system permease protein BtuC from Vibrio parahaemolyticus serotype O3:K6 (strain RIMD 2210633).